We begin with the raw amino-acid sequence, 351 residues long: Inner kinetochore subunit fta2 (351 aa).

Positions 1–71 (MSGRRYSQIS…SSNGRVDTDR (71 aa)) are disordered. Residues 7-18 (SQISQQEGSSSS) are compositionally biased toward low complexity. Residues 54–66 (NENSGQSKSSNGR) are compositionally biased toward polar residues.

The protein belongs to the CENP-P/CTF19 family. As to quaternary structure, component of the heterotetrameric kinetochore subcomplex COMA, which consists of fta2, fta7, mal2 and mis17. The COMA subcomplex is part of a larger constitutive centromere-associated network (CCAN) (also known as central kinetochore Sim4 complex in fission yeast), which is composed of at least cnl2, cnp3, cnp20, fta1, fta2, fta3, fta4, fta6, fta7, mal2, mhf1, mhf2, mis6, mis15, mis17, sim4 and wip1.

It is found in the nucleus. Its subcellular location is the chromosome. The protein resides in the centromere. It localises to the kinetochore. Functionally, component of the kinetochore, a multiprotein complex that assembles on centromeric DNA and attaches chromosomes to spindle microtubules, mediating chromosome segregation and sister chromatid segregation during meiosis and mitosis. Component of the inner kinetochore COMA complex, which connects centromere-associated proteins and the outer kinetochore. COMA interacts with other inner kinetochore proteins to form the inner kinetochore constitutive centromere-associated network (CCAN), which serves as a structural platform for outer kinetochore assembly. Fta2, fta3 and fta4 associate with the central core (cnt) and inner repeat (inr) region of the centromere. The sequence is that of Inner kinetochore subunit fta2 (fta2) from Schizosaccharomyces pombe (strain 972 / ATCC 24843) (Fission yeast).